We begin with the raw amino-acid sequence, 274 residues long: Malonyl-[acyl-carrier protein] O-methyltransferase (274 aa).

It belongs to the methyltransferase superfamily.

The enzyme catalyses malonyl-[ACP] + S-adenosyl-L-methionine = malonyl-[ACP] methyl ester + S-adenosyl-L-homocysteine. The protein operates within cofactor biosynthesis; biotin biosynthesis. Functionally, converts the free carboxyl group of a malonyl-thioester to its methyl ester by transfer of a methyl group from S-adenosyl-L-methionine (SAM). It allows to synthesize pimeloyl-ACP via the fatty acid synthetic pathway. The polypeptide is Malonyl-[acyl-carrier protein] O-methyltransferase (Priestia megaterium (strain DSM 319 / IMG 1521) (Bacillus megaterium)).